Here is a 357-residue protein sequence, read N- to C-terminus: Peptide chain release factor 1 (357 aa).

Gln234 carries the post-translational modification N5-methylglutamine. Residues 284–304 (RIEGERSEDRKSKIGTGDRSE) are disordered.

It belongs to the prokaryotic/mitochondrial release factor family. Methylated by PrmC. Methylation increases the termination efficiency of RF1.

The protein localises to the cytoplasm. In terms of biological role, peptide chain release factor 1 directs the termination of translation in response to the peptide chain termination codons UAG and UAA. The protein is Peptide chain release factor 1 of Pelagibacter ubique (strain HTCC1062).